The sequence spans 921 residues: Protein translocase subunit SecA (921 aa).

ATP contacts are provided by residues Gln-87, Gly-105–Thr-109, and Asp-501. A disordered region spans residues Pro-831–Glu-886. A compositionally biased stretch (pro residues) spans Ala-872–Val-881. Zn(2+) is bound by residues Cys-905, Cys-907, Cys-916, and His-917.

Belongs to the SecA family. In terms of assembly, monomer and homodimer. Part of the essential Sec protein translocation apparatus which comprises SecA, SecYEG and auxiliary proteins SecDF-YajC and YidC. The cofactor is Zn(2+).

Its subcellular location is the cell inner membrane. It localises to the cytoplasm. It carries out the reaction ATP + H2O + cellular proteinSide 1 = ADP + phosphate + cellular proteinSide 2.. Part of the Sec protein translocase complex. Interacts with the SecYEG preprotein conducting channel. Has a central role in coupling the hydrolysis of ATP to the transfer of proteins into and across the cell membrane, serving both as a receptor for the preprotein-SecB complex and as an ATP-driven molecular motor driving the stepwise translocation of polypeptide chains across the membrane. This Gluconobacter oxydans (strain 621H) (Gluconobacter suboxydans) protein is Protein translocase subunit SecA.